Consider the following 182-residue polypeptide: Large ribosomal subunit protein bL25 (182 aa).

It belongs to the bacterial ribosomal protein bL25 family. CTC subfamily. As to quaternary structure, part of the 50S ribosomal subunit; part of the 5S rRNA/L5/L18/L25 subcomplex. Contacts the 5S rRNA. Binds to the 5S rRNA independently of L5 and L18.

Functionally, this is one of the proteins that binds to the 5S RNA in the ribosome where it forms part of the central protuberance. In Borreliella afzelii (strain PKo) (Borrelia afzelii), this protein is Large ribosomal subunit protein bL25.